Consider the following 315-residue polypeptide: MNTSAEGQSPTSPQSVAILGAGAWGSTLAMLAQGQGHRVRVWNRRKGLDLAEVLQGSQILISAVSMAGVRPVVEAVRQVGIPPQAILVSATKGLDPLQLLTPTQIWGATFPEQPLVVLSGPNLSAEIRQGLPAAAVVASRDPWAAVQVQYALSSERFRLYTSSDPLGVELGGTLKNVIAIAVGVCDGLQLGANARAALVTRGLAEMIRVGSKLGARAETFNGLSGLGDLLATCHSRLSRNYRVGYGLGQGQPLSQILAEIEGTAEGVYTAPVVVEIAAQHGIQVPITQEVHLLLQGQTTPTAALTRLMERQLTSE.

NADPH-binding residues include Trp24, Arg44, Arg45, and Lys92. 2 residues coordinate sn-glycerol 3-phosphate: Lys92 and Gly120. Residue Ser124 coordinates NADPH. The sn-glycerol 3-phosphate site is built by Lys175, Asp228, Ser238, Arg239, and Asn240. Catalysis depends on Lys175, which acts as the Proton acceptor. Arg239 lines the NADPH pocket. Glu265 contributes to the NADPH binding site.

It belongs to the NAD-dependent glycerol-3-phosphate dehydrogenase family.

It localises to the cytoplasm. It catalyses the reaction sn-glycerol 3-phosphate + NAD(+) = dihydroxyacetone phosphate + NADH + H(+). The catalysed reaction is sn-glycerol 3-phosphate + NADP(+) = dihydroxyacetone phosphate + NADPH + H(+). It functions in the pathway membrane lipid metabolism; glycerophospholipid metabolism. Its function is as follows. Catalyzes the reduction of the glycolytic intermediate dihydroxyacetone phosphate (DHAP) to sn-glycerol 3-phosphate (G3P), the key precursor for phospholipid synthesis. This chain is Glycerol-3-phosphate dehydrogenase [NAD(P)+], found in Synechococcus sp. (strain JA-2-3B'a(2-13)) (Cyanobacteria bacterium Yellowstone B-Prime).